Consider the following 192-residue polypeptide: Cysteine and glycine-rich protein 1 (192 aa).

An LIM zinc-binding 1 domain is found at 10–61 (CGVCQKAVYFAEEVQCEGSSFHKSCFLCMVCKKNLDSTTVAVHGDEIYCKSC). Positions 64 to 69 (KKYGPK) match the Nuclear localization signal motif. Residues 118-169 (CPRCGQAVYAAEKVIGAGKSWHKSCFRCAKCGKSLESTTLADKDGEIYCKGC) form the LIM zinc-binding 2 domain.

In terms of assembly, probable monomer. Interacts with ZYX. Most prominent in tissues that are enriched in smooth muscle cells, such as gizzard, stomach, and intestine. Lower level in the heart, no expression in liver, skeletal muscle, or brain.

Its subcellular location is the nucleus. The protein localises to the cytoplasm. It is found in the cytoskeleton. Functionally, heat stable protein, that interacts with zyxin/ZYX. May be a component of a signal transduction pathway that mediates adhesion-stimulated changes in gene expression. The polypeptide is Cysteine and glycine-rich protein 1 (CSRP1) (Gallus gallus (Chicken)).